The sequence spans 400 residues: Arrestin, lateral eye (400 aa).

This sequence belongs to the arrestin family. Post-translationally, phosphorylated.

Its function is as follows. Plays an important role in the photoreceptor transduction. This Limulus polyphemus (Atlantic horseshoe crab) protein is Arrestin, lateral eye.